A 294-amino-acid chain; its full sequence is Ethylene-inducing xylanase 3 (294 aa).

The N-terminal stretch at 1 to 19 is a signal peptide; that stretch reads MVCFSSLFVAASAIAGVFA. Positions 31–226 constitute a GH11 domain; that stretch reads QSTPSSQGTH…SSGSARINVA (196 aa). E122 (nucleophile) is an active-site residue. The active-site Proton donor is the E213. The 36-residue stretch at 259 to 294 folds into the CBM1 domain; the sequence is SCAARWGQCGGSGWNGATCCSAGTCQAQNQWYSQCL.

It belongs to the glycosyl hydrolase 11 (cellulase G) family.

The catalysed reaction is Endohydrolysis of (1-&gt;4)-beta-D-xylosidic linkages in xylans.. Its pathway is glycan degradation; xylan degradation. In terms of biological role, endo-1,4-beta-xylanase involved in the hydrolysis of xylan, a major structural heterogeneous polysaccharide found in plant biomass representing the second most abundant polysaccharide in the biosphere, after cellulose. Exhibits immunity-inducing activity in Nicotiana benthamiana. Can induce strong oxidative burst, activate the expression of defense-related genes, and increase resistance against oomycete and fungal pathogens in N.benthamiana. The polypeptide is Ethylene-inducing xylanase 3 (Verticillium dahliae (strain VdLs.17 / ATCC MYA-4575 / FGSC 10137) (Verticillium wilt)).